Reading from the N-terminus, the 520-residue chain is Cobyric acid synthase (520 aa).

The 195-residue stretch at 257–451 folds into the GATase cobBQ-type domain; that stretch reads WLTVAAVRLP…VHGLLESDGF (195 aa). Catalysis depends on cysteine 338, which acts as the Nucleophile. Histidine 443 is an active-site residue.

It belongs to the CobB/CobQ family. CobQ subfamily.

Its pathway is cofactor biosynthesis; adenosylcobalamin biosynthesis. Its function is as follows. Catalyzes amidations at positions B, D, E, and G on adenosylcobyrinic A,C-diamide. NH(2) groups are provided by glutamine, and one molecule of ATP is hydrogenolyzed for each amidation. In Nocardia farcinica (strain IFM 10152), this protein is Cobyric acid synthase.